The following is a 219-amino-acid chain: Cytidylate kinase (219 aa).

10-18 (GPAAAGKST) is a binding site for ATP.

It belongs to the cytidylate kinase family. Type 1 subfamily.

It localises to the cytoplasm. The enzyme catalyses CMP + ATP = CDP + ADP. It catalyses the reaction dCMP + ATP = dCDP + ADP. In Staphylococcus saprophyticus subsp. saprophyticus (strain ATCC 15305 / DSM 20229 / NCIMB 8711 / NCTC 7292 / S-41), this protein is Cytidylate kinase.